We begin with the raw amino-acid sequence, 297 residues long: tRNA-cytidine(32) 2-sulfurtransferase (297 aa).

The PP-loop motif signature appears at 45–50 (SGGKDS). The [4Fe-4S] cluster site is built by Cys120, Cys123, and Cys211.

This sequence belongs to the TtcA family. In terms of assembly, homodimer. Mg(2+) serves as cofactor. Requires [4Fe-4S] cluster as cofactor.

The protein resides in the cytoplasm. The enzyme catalyses cytidine(32) in tRNA + S-sulfanyl-L-cysteinyl-[cysteine desulfurase] + AH2 + ATP = 2-thiocytidine(32) in tRNA + L-cysteinyl-[cysteine desulfurase] + A + AMP + diphosphate + H(+). It participates in tRNA modification. In terms of biological role, catalyzes the ATP-dependent 2-thiolation of cytidine in position 32 of tRNA, to form 2-thiocytidine (s(2)C32). The sulfur atoms are provided by the cysteine/cysteine desulfurase (IscS) system. This Vibrio campbellii (strain ATCC BAA-1116) protein is tRNA-cytidine(32) 2-sulfurtransferase.